Consider the following 1122-residue polypeptide: AP-4 complex subunit epsilon-1 (1122 aa).

S699 carries the post-translational modification Phosphoserine. Composition is skewed to basic and acidic residues over residues Y714–A728 and T745–E760. 2 disordered regions span residues Y714–E760 and S797–L861. The interval P726–S1122 is interaction with TEPSIN. The span at E841 to S853 shows a compositional bias: low complexity. Residue S851 is modified to Phosphoserine.

This sequence belongs to the adaptor complexes large subunit family. As to quaternary structure, adaptor protein complex 4 (AP-4) is a heterotetramer composed of two large adaptins (epsilon-type subunit AP4E1 and beta-type subunit AP4B1), a medium adaptin (mu-type subunit AP4M1) and a small adaptin (sigma-type AP4S1). Interacts with TEPSIN. Interacts with GRIA2; probably indirect it mediates the somatodendritic localization of GRIA2 in neurons.

Its subcellular location is the golgi apparatus. It is found in the trans-Golgi network membrane. In terms of biological role, component of the adaptor protein complex 4 (AP-4). Adaptor protein complexes are vesicle coat components involved both in vesicle formation and cargo selection. They control the vesicular transport of proteins in different trafficking pathways. AP-4 forms a non clathrin-associated coat on vesicles departing the trans-Golgi network (TGN) and may be involved in the targeting of proteins from the trans-Golgi network (TGN) to the endosomal-lysosomal system. It is also involved in protein sorting to the basolateral membrane in epithelial cells and the proper asymmetric localization of somatodendritic proteins in neurons. AP-4 is involved in the recognition and binding of tyrosine-based sorting signals found in the cytoplasmic part of cargos, but may also recognize other types of sorting signal. In Mus musculus (Mouse), this protein is AP-4 complex subunit epsilon-1.